A 474-amino-acid chain; its full sequence is Dipeptidase A (474 aa).

Residue C6 is part of the active site.

Belongs to the peptidase C69 family. In terms of assembly, homooctamer.

The catalysed reaction is an L-aminoacyl-L-amino acid + H2O = 2 an L-alpha-amino acid. Its activity is regulated as follows. Inhibited by Zn(2+), Cu(2+), Ca(2+) and Cd(2+). Hydrolyzes a wide range of dipeptides but unable to hydrolyze dipeptides containing proline. Highest activity against Met-Ala. The sequence is that of Dipeptidase A (pepDA) from Lactobacillus helveticus (Lactobacillus suntoryeus).